The following is a 197-amino-acid chain: Probable GTP-binding protein EngB (197 aa).

The region spanning 22–195 (NLPEIAFVGR…VDYLFDDLVE (174 aa)) is the EngB-type G domain. GTP-binding positions include 30-37 (GRSNVGKS), 57-61 (GKTRL), 75-78 (DLPG), 142-145 (TKSD), and 174-176 (FSS). Residues Ser37 and Thr59 each contribute to the Mg(2+) site.

It belongs to the TRAFAC class TrmE-Era-EngA-EngB-Septin-like GTPase superfamily. EngB GTPase family. The cofactor is Mg(2+).

In terms of biological role, necessary for normal cell division and for the maintenance of normal septation. This chain is Probable GTP-binding protein EngB, found in Clostridium perfringens (strain 13 / Type A).